We begin with the raw amino-acid sequence, 301 residues long: MKLQFLGTGSGMPSKQRNVSGLALDLSNVTWLIDCGEGTQHQMLYTKIKPRKVTAVWVTHLHGDHVFGLPGFLSTRSALDGTAPLTVYGPKGLKKWLEATLRVTGSHLGYELTVTEYSDGDTFIQDDHLVTVRKLEHRFPSFGFRIDGPEKPGMLRVDLVRELGVPSGPIYRTIKESDRFEFEGKWYDSKEYVTEPIPGKIVAILGDTIPCENARKLADGADLLVHEATFMEAEQALARKYGHSTTREATALANACAVGKLIVTHISARYVGREEEFVQEVVSDFPSSLVATDFLEYTVGD.

Zn(2+) contacts are provided by His60, His62, Asp64, His65, His137, Asp207, and His265. The Proton acceptor role is filled by Asp64.

The protein belongs to the RNase Z family. As to quaternary structure, homodimer. The cofactor is Zn(2+).

The catalysed reaction is Endonucleolytic cleavage of RNA, removing extra 3' nucleotides from tRNA precursor, generating 3' termini of tRNAs. A 3'-hydroxy group is left at the tRNA terminus and a 5'-phosphoryl group is left at the trailer molecule.. Zinc phosphodiesterase, which displays some tRNA 3'-processing endonuclease activity. Probably involved in tRNA maturation, by removing a 3'-trailer from precursor tRNA. The polypeptide is Ribonuclease Z (Exiguobacterium sp. (strain ATCC BAA-1283 / AT1b)).